Here is a 227-residue protein sequence, read N- to C-terminus: Enolase-phosphatase E1 (227 aa).

It belongs to the HAD-like hydrolase superfamily. MasA/MtnC family. Monomer. It depends on Mg(2+) as a cofactor.

The enzyme catalyses 5-methylsulfanyl-2,3-dioxopentyl phosphate + H2O = 1,2-dihydroxy-5-(methylsulfanyl)pent-1-en-3-one + phosphate. The protein operates within amino-acid biosynthesis; L-methionine biosynthesis via salvage pathway; L-methionine from S-methyl-5-thio-alpha-D-ribose 1-phosphate: step 3/6. Its pathway is amino-acid biosynthesis; L-methionine biosynthesis via salvage pathway; L-methionine from S-methyl-5-thio-alpha-D-ribose 1-phosphate: step 4/6. Its function is as follows. Bifunctional enzyme that catalyzes the enolization of 2,3-diketo-5-methylthiopentyl-1-phosphate (DK-MTP-1-P) into the intermediate 2-hydroxy-3-keto-5-methylthiopentenyl-1-phosphate (HK-MTPenyl-1-P), which is then dephosphorylated to form the acireductone 1,2-dihydroxy-3-keto-5-methylthiopentene (DHK-MTPene). The chain is Enolase-phosphatase E1 from Azotobacter vinelandii (strain DJ / ATCC BAA-1303).